Here is a 459-residue protein sequence, read N- to C-terminus: Eukaryotic translation initiation factor 3 subunit M (459 aa).

The PCI domain maps to 207–384; it reads LDWAQTHVVD…SEFLVHRATY (178 aa). Residues 431–459 form a disordered region; the sequence is AAAEGEKGDKNNKGPSERRRAPQEIAAAE. The segment covering 434-452 has biased composition (basic and acidic residues); that stretch reads EGEKGDKNNKGPSERRRAP.

This sequence belongs to the eIF-3 subunit M family. Component of the eukaryotic translation initiation factor 3 (eIF-3) complex.

Its subcellular location is the cytoplasm. Component of the eukaryotic translation initiation factor 3 (eIF-3) complex, which is involved in protein synthesis of a specialized repertoire of mRNAs and, together with other initiation factors, stimulates binding of mRNA and methionyl-tRNAi to the 40S ribosome. The eIF-3 complex specifically targets and initiates translation of a subset of mRNAs involved in cell proliferation. The sequence is that of Eukaryotic translation initiation factor 3 subunit M from Emericella nidulans (strain FGSC A4 / ATCC 38163 / CBS 112.46 / NRRL 194 / M139) (Aspergillus nidulans).